A 399-amino-acid polypeptide reads, in one-letter code: Insertion element IS116 uncharacterized 44.8 kDa protein (399 aa).

The protein belongs to the transposase IS1111A/IS1328/IS1533 family.

The sequence is that of Insertion element IS116 uncharacterized 44.8 kDa protein from Streptomyces clavuligerus.